The following is a 526-amino-acid chain: Putative D-lactate dehydrogenase C713.03, mitochondrial (526 aa).

Residues 93–272 (YRGKTQLALK…TKLSVICPKR (180 aa)) enclose the FAD-binding PCMH-type domain.

Belongs to the FAD-binding oxidoreductase/transferase type 4 family. The cofactor is FAD.

It is found in the mitochondrion matrix. The enzyme catalyses (R)-lactate + 2 Fe(III)-[cytochrome c] = 2 Fe(II)-[cytochrome c] + pyruvate + 2 H(+). This is Putative D-lactate dehydrogenase C713.03, mitochondrial from Schizosaccharomyces pombe (strain 972 / ATCC 24843) (Fission yeast).